The chain runs to 117 residues: Glycoprotein hormones alpha chain (117 aa).

An N-terminal signal peptide occupies residues 1–23 (MGSVKSAGLSLLLLSFLLYVADS). 5 disulfide bridges follow: Cys-34/Cys-57, Cys-37/Cys-86, Cys-54/Cys-107, Cys-58/Cys-109, and Cys-85/Cys-112. N-linked (GlcNAc...) asparagine glycosylation is found at Asn-78 and Asn-103.

Belongs to the glycoprotein hormones subunit alpha family. In terms of assembly, heterodimer. Glycoprotein hormones are heterodimers composed of a common alpha chain described here and a unique beta chain which confers their biological specificity to the different hormones.

It localises to the secreted. Functionally, shared alpha chain of heterodimeric glycoprotein hormones. These hormones bind specific receptors on target cells that in turn activate downstream signaling pathways. Involved in gametogenesis and steroidogenesis. This is Glycoprotein hormones alpha chain (cga) from Acanthopagrus latus (Yellowfin seabream).